The chain runs to 362 residues: Peptide chain release factor 1 (362 aa).

Position 237 is an N5-methylglutamine (Gln-237).

The protein belongs to the prokaryotic/mitochondrial release factor family. Methylated by PrmC. Methylation increases the termination efficiency of RF1.

The protein resides in the cytoplasm. Functionally, peptide chain release factor 1 directs the termination of translation in response to the peptide chain termination codons UAG and UAA. This is Peptide chain release factor 1 from Vibrio parahaemolyticus serotype O3:K6 (strain RIMD 2210633).